We begin with the raw amino-acid sequence, 765 residues long: Transcription factor RFX3 (765 aa).

A DNA-binding region (RFX-type winged-helix) is located at residues 189-264; that stretch reads HLQWLLDNYE…YHYYGIRVKP (76 aa).

It belongs to the RFX family.

The protein localises to the nucleus. In terms of biological role, transcription factor required for ciliogenesis and islet cell differentiation during endocrine pancreas development. This Danio rerio (Zebrafish) protein is Transcription factor RFX3 (rfx3).